Reading from the N-terminus, the 466-residue chain is Probable multidrug resistance protein NorM (466 aa).

11 helical membrane passes run 68–90 (AHTV…SPLV), 110–132 (LWVA…HILI), 142–164 (ALAQ…FIAL), 177–199 (PLWI…IHGL), 209–231 (GAGL…IAAW), 251–273 (LVRQ…YGLF), 288–310 (LAAH…GIGM), 331–353 (AGLV…IILG), 368–387 (SAAT…TFFI), 407–429 (MTLA…VLAF), and 433–455 (LGAV…LLVL).

It belongs to the multi antimicrobial extrusion (MATE) (TC 2.A.66.1) family.

The protein resides in the cell inner membrane. Multidrug efflux pump. The sequence is that of Probable multidrug resistance protein NorM (norM) from Bradyrhizobium diazoefficiens (strain JCM 10833 / BCRC 13528 / IAM 13628 / NBRC 14792 / USDA 110).